The following is a 508-amino-acid chain: Protein phosphatase PP2A regulatory subunit B (508 aa).

WD repeat units follow at residues 19 to 58 (TEAD…KKQS), 81 to 122 (EIEE…IKLV), 166 to 204 (AHAY…QSFN), 215 to 255 (ELTE…LCDS), 274 to 312 (EITS…KPIK), and 329 to 370 (ENDA…GNDD). The interval 369 to 466 (DDKPKFKSAF…MRRRMTSGVG (98 aa)) is disordered. Over residues 396–418 (DDDDDDDDDDDDEEADDEFDEEV) the composition is skewed to acidic residues. Residues 447–461 (FKSKKSGQHPMRRRM) show a composition bias toward basic residues. The stretch at 477–507 (DFKKSILHLSWHPRENSVAIAATNNLYIFST) is one WD 7 repeat.

Belongs to the phosphatase 2A regulatory subunit B family. As to quaternary structure, PP2A exists in several trimeric forms, all of which consist of a core composed of a catalytic subunit associated with a 65 kDa (PR65) (Subunit A) and a 55 kDa (PR55) (Subunit B) regulatory subunit.

Functionally, phosphatase 2A affects a variety of biological processes in the cell such as transcription, cell cycle progression and cellular morphogenesis, and provides an initial identification of critical substrates for this phosphatase. The regulatory subunit may direct the catalytic subunit to distinct, albeit overlapping, subsets of substrates. The polypeptide is Protein phosphatase PP2A regulatory subunit B (CDC55) (Candida tropicalis (Yeast)).